The chain runs to 131 residues: Ribosome-binding factor A (131 aa).

Belongs to the RbfA family. As to quaternary structure, monomer. Binds 30S ribosomal subunits, but not 50S ribosomal subunits or 70S ribosomes.

Its subcellular location is the cytoplasm. One of several proteins that assist in the late maturation steps of the functional core of the 30S ribosomal subunit. Associates with free 30S ribosomal subunits (but not with 30S subunits that are part of 70S ribosomes or polysomes). Required for efficient processing of 16S rRNA. May interact with the 5'-terminal helix region of 16S rRNA. This is Ribosome-binding factor A from Vibrio vulnificus (strain CMCP6).